We begin with the raw amino-acid sequence, 512 residues long: MESVIFSINGEIIQVNKEIITASPYNFFKRIQDHHLKDEAIILNGINYHAFESLLDYIRWKKINITINNVEMILVAAIIIDVPPVVDLCVKTMIHNINSTNCIRMFNFSKRYGIKKLYNASMSEIINNITAVTSDPEFGKLSKDELTTILSHENVNVNHEDVTAMILLKWIHKNPNDVDIINILHPKFMTNTMRNAISLLGLTISKSTKPVTRNGIKHNIVVIKNSDYISTITHYSPRTEYWTIVGNTDRQFYNANVLHNCLYIIGGMINNRHVYSVSRVDLETKKWKTVTNMSSLKSEVSTCVNDGKLYVIGGLEFSISTGVAEYLKHGTSKWIRLPNLITPRYSGASVFVNDDIYVMGGVYTTYEKYVVLNDVECFTKNRWIKKSPMPRHHSIVYAVEYDGDIYVITGITHETRNYLYKYIVKEDKWIELYMYFNHVGKMFVCSCGDYILIIADAKYEYYPKSNTWNLFDMSTRNIEYYDMFTKDETPKCNVTHKSLPSFLSNCEKQFLQ.

The BTB domain maps to 2-67 (ESVIFSINGE…IRWKKINITI (66 aa)). In terms of domain architecture, BACK spans 102–176 (CIRMFNFSKR…LLKWIHKNPN (75 aa)). Kelch repeat units lie at residues 216–261 (IKHN…LHNC), 262–307 (LYII…VNDG), 309–354 (LYVI…FVND), 356–403 (IYVM…EYDG), 405–449 (IYVI…SCGD), and 452–498 (LIIA…THKS).

The protein belongs to the poxviruses Kelch family.

In Vaccinia virus (strain Western Reserve) (VACV), this protein is Kelch repeat protein C2.